Here is a 228-residue protein sequence, read N- to C-terminus: NAD(P)H-hydrate epimerase (228 aa).

The 206-residue stretch at 9–214 folds into the YjeF N-terminal domain; the sequence is AQNIDQELFN…DLLLKKYELE (206 aa). Position 60 to 64 (60 to 64) interacts with (6S)-NADPHX; sequence NNGGD. Positions 61 and 125 each coordinate K(+). (6S)-NADPHX contacts are provided by residues 129–135 and Asp-158; that span reads GFSFKGE. Ser-161 contacts K(+).

It belongs to the NnrE/AIBP family. K(+) is required as a cofactor.

The enzyme catalyses (6R)-NADHX = (6S)-NADHX. It catalyses the reaction (6R)-NADPHX = (6S)-NADPHX. In terms of biological role, catalyzes the epimerization of the S- and R-forms of NAD(P)HX, a damaged form of NAD(P)H that is a result of enzymatic or heat-dependent hydration. This is a prerequisite for the S-specific NAD(P)H-hydrate dehydratase to allow the repair of both epimers of NAD(P)HX. The polypeptide is NAD(P)H-hydrate epimerase (Nematostella vectensis (Starlet sea anemone)).